A 234-amino-acid polypeptide reads, in one-letter code: LexA repressor (234 aa).

Residues 26–46 (FDEMKEALDLASKSGIHRLIT) constitute a DNA-binding region (H-T-H motif). The segment at 73–107 (ATAAAPPKGRGAFRPQVFEGGGAPPPAASPAAAAN) is disordered. Residues Ser155 and Lys192 each act as for autocatalytic cleavage activity in the active site.

It belongs to the peptidase S24 family. Homodimer.

It catalyses the reaction Hydrolysis of Ala-|-Gly bond in repressor LexA.. Its function is as follows. Represses a number of genes involved in the response to DNA damage (SOS response), including recA and lexA. In the presence of single-stranded DNA, RecA interacts with LexA causing an autocatalytic cleavage which disrupts the DNA-binding part of LexA, leading to derepression of the SOS regulon and eventually DNA repair. This is LexA repressor from Caulobacter vibrioides (strain ATCC 19089 / CIP 103742 / CB 15) (Caulobacter crescentus).